We begin with the raw amino-acid sequence, 286 residues long: Polyamine aminopropyltransferase (286 aa).

A PABS domain is found at 5–238; that stretch reads TMWHETLHDQ…GIMTFAWATD (234 aa). Position 33 (Q33) interacts with S-methyl-5'-thioadenosine. Positions 64 and 88 each coordinate spermidine. Residues E108 and 140-141 each bind S-methyl-5'-thioadenosine; that span reads DG. D158 functions as the Proton acceptor in the catalytic mechanism. 158 to 161 is a spermidine binding site; the sequence is DCTD. P165 serves as a coordination point for S-methyl-5'-thioadenosine.

This sequence belongs to the spermidine/spermine synthase family. As to quaternary structure, homodimer or homotetramer.

It localises to the cytoplasm. It catalyses the reaction S-adenosyl 3-(methylsulfanyl)propylamine + putrescine = S-methyl-5'-thioadenosine + spermidine + H(+). Its pathway is amine and polyamine biosynthesis; spermidine biosynthesis; spermidine from putrescine: step 1/1. Catalyzes the irreversible transfer of a propylamine group from the amino donor S-adenosylmethioninamine (decarboxy-AdoMet) to putrescine (1,4-diaminobutane) to yield spermidine. The polypeptide is Polyamine aminopropyltransferase (Salmonella schwarzengrund (strain CVM19633)).